The following is a 316-amino-acid chain: Acetyl-coenzyme A carboxylase carboxyl transferase subunit beta (316 aa).

The region spanning 39–308 (LWHKCSKCGV…TPPMVLWETM (270 aa)) is the CoA carboxyltransferase N-terminal domain. 4 residues coordinate Zn(2+): cysteine 43, cysteine 46, cysteine 62, and cysteine 65. The segment at 43 to 65 (CSKCGVLTYTKDLRANQMVCVEC) adopts a C4-type zinc-finger fold.

This sequence belongs to the AccD/PCCB family. In terms of assembly, acetyl-CoA carboxylase is a heterohexamer composed of biotin carboxyl carrier protein (AccB), biotin carboxylase (AccC) and two subunits each of ACCase subunit alpha (AccA) and ACCase subunit beta (AccD). Requires Zn(2+) as cofactor.

The protein localises to the cytoplasm. The enzyme catalyses N(6)-carboxybiotinyl-L-lysyl-[protein] + acetyl-CoA = N(6)-biotinyl-L-lysyl-[protein] + malonyl-CoA. It functions in the pathway lipid metabolism; malonyl-CoA biosynthesis; malonyl-CoA from acetyl-CoA: step 1/1. Functionally, component of the acetyl coenzyme A carboxylase (ACC) complex. Biotin carboxylase (BC) catalyzes the carboxylation of biotin on its carrier protein (BCCP) and then the CO(2) group is transferred by the transcarboxylase to acetyl-CoA to form malonyl-CoA. This Nostoc sp. (strain PCC 7120 / SAG 25.82 / UTEX 2576) protein is Acetyl-coenzyme A carboxylase carboxyl transferase subunit beta.